Reading from the N-terminus, the 222-residue chain is Interleukin-12 subunit alpha (222 aa).

The first 25 residues, 1–25 (MCPLRNLLLVATLVLLNHLDHLSLG), serve as a signal peptide directing secretion. Disulfide bonds link Cys-40-Cys-113, Cys-67-Cys-199, and Cys-88-Cys-126. N-linked (GlcNAc...) asparagine glycosylation is found at Asn-42 and Asn-96.

It belongs to the IL-6 superfamily. In terms of assembly, heterodimer with IL12B; disulfide-linked. This heterodimer is known as interleukin IL-12. Heterodimer with EBI3/IL27B; not disulfide-linked. This heterodimer is known as interleukin IL-35. Interacts with NBR1; this interaction promotes IL-12 secretion.

It is found in the secreted. In terms of biological role, heterodimerizes with IL12B to form the IL-12 cytokine or with EBI3/IL27B to form the IL-35 cytokine. IL-12 is primarily produced by professional antigen-presenting cells (APCs) such as B-cells and dendritic cells (DCs) as well as macrophages and granulocytes and regulates T-cell and natural killer-cell responses, induces the production of interferon-gamma (IFN-gamma), favors the differentiation of T-helper 1 (Th1) cells and is an important link between innate resistance and adaptive immunity. Mechanistically, exerts its biological effects through a receptor composed of IL12R1 and IL12R2 subunits. Binding to the receptor results in the rapid tyrosine phosphorylation of a number of cellular substrates including the JAK family kinases TYK2 and JAK2. In turn, recruited STAT4 gets phosphorylated and translocates to the nucleus where it regulates cytokine/growth factor responsive genes. As part of IL-35, plays essential roles in maintaining the immune homeostasis of the liver microenvironment and also functions as an immune-suppressive cytokine. Mediates biological events through unconventional receptors composed of IL12RB2 and gp130/IL6ST heterodimers or homodimers. Signaling requires the transcription factors STAT1 and STAT4, which form a unique heterodimer that binds to distinct DNA sites. The chain is Interleukin-12 subunit alpha (IL12A) from Sus scrofa (Pig).